The chain runs to 594 residues: Probable ABC transporter-binding protein DR_1571 (594 aa).

Residues 1-18 (MKKVMMLALALGASTSLA) form the signal peptide.

It belongs to the bacterial solute-binding protein 5 family.

Its function is as follows. Probably part of a binding-protein-dependent transport system. This Deinococcus radiodurans (strain ATCC 13939 / DSM 20539 / JCM 16871 / CCUG 27074 / LMG 4051 / NBRC 15346 / NCIMB 9279 / VKM B-1422 / R1) protein is Probable ABC transporter-binding protein DR_1571.